We begin with the raw amino-acid sequence, 715 residues long: Protein psiH (715 aa).

The signal sequence occupies residues 1–20 (MNYLKPTIFLILCLVTFVYS). The Extracellular portion of the chain corresponds to 21-651 (QPSTLTIQGT…ICKTGAVVST (631 aa)). A PA14 domain is found at 115–256 (NYDSKKQVYV…YDYCGVCSGD (142 aa)). 4 N-linked (GlcNAc...) asparagine glycosylation sites follow: N149, N377, N528, and N622. The chain crosses the membrane as a helical span at residues 652 to 672 (AVIAGVTVAGAVALGVFIYGG). Residues 673 to 715 (KRGYDYWKESRNVQFSGSNSNPLYEQNPNGSGVNPLYNDNSAL) lie on the Cytoplasmic side of the membrane. The tract at residues 690–715 (SNSNPLYEQNPNGSGVNPLYNDNSAL) is disordered.

This sequence belongs to the prespore-cell-inducing factor family.

Its subcellular location is the membrane. The sequence is that of Protein psiH (psiH) from Dictyostelium discoideum (Social amoeba).